A 372-amino-acid polypeptide reads, in one-letter code: GTPase Obg (372 aa).

One can recognise an Obg domain in the interval 1-159; that stretch reads MAFVDEAKFF…KWLLIELKLM (159 aa). The segment at 121-141 is disordered; that stretch reads GSGGMGNPHFSSGSNRTPRVA. Positions 160–329 constitute an OBG-type G domain; the sequence is ADVGLVGLPN…LVKLIGDIID (170 aa). GTP contacts are provided by residues 166–173, 191–195, 213–216, 280–283, and 310–312; these read GLPNAGKS, FTTLE, DIPG, NKCD, and SAI. Mg(2+) contacts are provided by Ser-173 and Thr-193. The interval 346-372 is disordered; that stretch reads QDLKKQKEEERRQELKKQKEEEQAKDE.

This sequence belongs to the TRAFAC class OBG-HflX-like GTPase superfamily. OBG GTPase family. Monomer. Mg(2+) serves as cofactor.

The protein localises to the cytoplasm. An essential GTPase which binds GTP, GDP and possibly (p)ppGpp with moderate affinity, with high nucleotide exchange rates and a fairly low GTP hydrolysis rate. Plays a role in control of the cell cycle, stress response, ribosome biogenesis and in those bacteria that undergo differentiation, in morphogenesis control. The sequence is that of GTPase Obg from Desulfotalea psychrophila (strain LSv54 / DSM 12343).